A 96-amino-acid polypeptide reads, in one-letter code: Putative septation protein SpoVG (96 aa).

Belongs to the SpoVG family.

Could be involved in septation. This Borrelia hermsii (strain HS1 / DAH) protein is Putative septation protein SpoVG.